A 316-amino-acid chain; its full sequence is Coiled-coil domain-containing protein 42 (316 aa).

Coiled coils occupy residues 43-151 (RLLE…EYSI) and 182-236 (HHDL…SDVI).

Belongs to the CFAP73 family. As to quaternary structure, interacts with ODF1 and ODF2. Interacts with CCDC38. Interacts with CCDC146. Interacts with CFAP53.

It localises to the cytoplasm. The protein resides in the perinuclear region. The protein localises to the cytoskeleton. It is found in the cell projection. Its subcellular location is the cilium. It localises to the flagellum. The protein resides in the microtubule organizing center. The protein localises to the centrosome. Essential for male fertility. Required for sperm development. This Bos taurus (Bovine) protein is Coiled-coil domain-containing protein 42.